Reading from the N-terminus, the 279-residue chain is uncharacterized protein (279 aa).

Transmembrane regions (helical) follow at residues 1–21 (MGFIKSTLLATVTVFVGLCGI), 38–58 (FACHTFLAISSAYGVIASVVA), and 131–151 (SLRYVPILGWFMILSDVVFID).

Belongs to the 1-acyl-sn-glycerol-3-phosphate acyltransferase family.

It localises to the endoplasmic reticulum membrane. This is an uncharacterized protein from Schizosaccharomyces pombe (strain 972 / ATCC 24843) (Fission yeast).